The following is a 508-amino-acid chain: Putative POTE ankyrin domain family member M (508 aa).

5 ANK repeats span residues 172–201 (QKRT…QLNI), 205–234 (KKRT…DPNI), 238–267 (YGNT…DIES), 271–300 (HGLT…NLNA), and 304–333 (YGRT…DVSS). Residues 369–487 (SSENSNPEQD…KQLSEEQNTG (119 aa)) are disordered. 2 stretches are compositionally biased toward basic and acidic residues: residues 377-392 (QDLK…RLKG) and 406-421 (EINK…EMKK). The span at 476 to 487 (TQKQLSEEQNTG) shows a compositional bias: polar residues.

The protein belongs to the POTE family.

This is Putative POTE ankyrin domain family member M (POTEM) from Homo sapiens (Human).